The primary structure comprises 602 residues: Arginine--tRNA ligase (602 aa).

The 'HIGH' region signature appears at 138 to 148; that stretch reads ANPTGPMHVGH.

The protein belongs to the class-I aminoacyl-tRNA synthetase family. In terms of assembly, monomer.

It is found in the cytoplasm. It carries out the reaction tRNA(Arg) + L-arginine + ATP = L-arginyl-tRNA(Arg) + AMP + diphosphate. This is Arginine--tRNA ligase from Gluconobacter oxydans (strain 621H) (Gluconobacter suboxydans).